The primary structure comprises 207 residues: Small ribosomal subunit protein uS4 (207 aa).

Residues alanine 26 to serine 47 form a disordered region. The segment covering asparagine 28–asparagine 39 has biased composition (polar residues). The 64-residue stretch at arginine 95 to isoleucine 158 folds into the S4 RNA-binding domain.

Belongs to the universal ribosomal protein uS4 family. As to quaternary structure, part of the 30S ribosomal subunit. Contacts protein S5. The interaction surface between S4 and S5 is involved in control of translational fidelity.

One of the primary rRNA binding proteins, it binds directly to 16S rRNA where it nucleates assembly of the body of the 30S subunit. Its function is as follows. With S5 and S12 plays an important role in translational accuracy. The polypeptide is Small ribosomal subunit protein uS4 (Orientia tsutsugamushi (strain Boryong) (Rickettsia tsutsugamushi)).